The primary structure comprises 2898 residues: MDLSRRLCSTALVAFIVLASIHDSQSRFPGLRQKRQYGANMYLPESSVTPGGEGNDPDEWTPWSSPSDCSRTCGGGVSYQTRECLRRDDRGEAVCSGGSRRYFSCNTQDCPEEESDFRAQQCSRFDRQQFDGVFYEWVPYTNAPNPCELNCMPKGERFYYRQREKVVDGTRCNDKDLDVCVNGECMPVGCDMMLGSDAKEDKCRKCGGDGSTCKTIRNTITTKDLAPGYNDLLLLPEGATNIRIEETVPSSNYLACRNHSGHYYLNGDWRIDFPRPMFFANSWWNYQRKPMGFAAPDQLTCSGPISESLFIVMLVQEKNISLDYEYSIPESLSHSQQDTHTWTHHQFNACSASCGGGSQSRKVTCNNRITLAEVNPSLCDQKSKPVEEQACGTEPCAPHWVEGEWSKCSKGCGSDGFQNRSITCERISSSGEHTVEEDAVCLKEVGNKPATKQECNRDVKNCPKYHLGPWTPCDKLCGDGKQTRKVTCFIEENGHKRVLPEEDCVEEKPETEKSCLLTPCEGVDWIISQWSGCNACGQNTETRTAICGNKEGKVYPEEFCEPEVPTLSRPCKSPKCEAQWFSSEWSKCSAPCGKGVKSRIVICGEFDGKTVTPADDDSKCNKETKPESEQDCEGEEKVCPGEWFTGPWGKCSKPCGGGERVREVLCLSNGTKSVNCDEEKVEPLSEKCNSEACTEDEILPLTSTDKPIEDDEEDCDEDGIELISDGLSDDEKSEDVIDLEGTAKTETTPEAEDLMQSDSPTPYDEFESTGTTFEGSGYDSESTTDSGISTEGSGDDEETSEASTDLSSSTDSGSTSSDSTSSDSSSSISSDATSEAPASSVSDSSDSTDASTETTGVSDDSTDVSSSTEASASESTDVSGASDSTGSTNASDSTPESSTEASSSTDDSTDSSDNSSNVSESSTEASSSSVSDSNDSSDGSTDGVSSTTENSSDSTSDATSDSTASSDSTDSTSDQTTETTPESSTDSTESSTLDASSTTDASSTSESSSESSTDGSSTTSNSASSETTGLSSDGSTTDATTAASDNTDITTDGSTDESTDGSSNASTEGSTEGASEDTTISTESSGSTESTDAIASDGSTTEGSTVEDLSSSTSSDVTSDSTITDSSPSTEVSGSTDSSSSTDGSSTDASSTEASSTDVTESTDSTVSGGTSDTTESGPTEESTTEGSTESTTEGSTDSTQSTDLDSTTSDIWSTSDKDDESESSTPYSFDSEVTKSKPRKCKPKKSTCAKSEYGCCPDGKSTPKGPFDEGCPIAKTCADTKYGCCLDGVSPAKGKNNKGCPKSQCAETLFGCCPDKFTAADGENDEGCPETTTVPPTTTTEETQPETTTEIEGSGQDSTTSEPDTKKSCSFSEFGCCPDAETSAKGPDFEGCGLASPVAKGCAESENGCCPDGQTPASGPNGEGCSGCTRERFGCCPDSQTPAHGPNKEGCCLDTQFGCCPDNILAARGPNNEGCECHYTPYGCCPDNKSAATGYNQEGCACETTQYGCCPDKITAAKGPKHEGCPCETTQFGCCPDGLTFAKGPHHHGCHCTQTEFKCCDDEKTPAKGPNGDGCTCVESKFGCCPDGVTKATDEKFGGCENVQEPPQKACGLPKETGTCNNYSVKYYFDTSYGGCARFWYGGCDGNDNRFESEAECKDTCQDYTGKHVCLLPKSAGPCTGFTKKWYFDVDRNRCEEFQYGGCYGTNNRFDSLEQCQGTCAASENLPTCEQPVESGPCAGNFERWYYDNETDICRPFTYGGCKGNKNNYPTEHACNYNCRQPGVLKDRCALPKQTGDCSEKLAKWHFSESEKRCVPFYYSGCGGNKNNFPTLESCEDHCPRQVAKDICEIPAEVGECANYVTSWYYDTQDQACRQFYYGGCGGNENRFPTEESCLARCDRKPEPTTTTPATRPQPSRQDVCDEEPAPGECSTWVLKWHFDRKIGACRQFYYGNCGGNGNRFETENDCQQRCLSQEPPAPTPPRAPAPTRQPDPAPTVAQCSQPADPGQCDKWALHWNYNETEGRCQSFYYGGCGGNDNRFATEEECSARCSVNIDIRIGADPVEHDTSKCFLAFEPGNCYNNVTRWFYNSAEGLCDEFVYTGCGGNANNYATEEECQNECNDAQTTCALPPVRGRCSDLSRRWYFDERSGECHEFEFTGCRGNRNNFVSQSDCLNFCIGEPVVEPSAPTYSVCAEPPEAGECDNRTTAWFYDSENMACTAFTYTGCGGNGNRFETRDQCERQCGEFKGVDVCNEPVTTGPCTDWQTKYYFNTASQACEPFTYGGCDGTGNRFSDLFECQTVCLAGREPRVGSAKEICLLPVATGRCNGPSVHERRWYYDDEAGNCVSFIYAGCSGNQNNFRSFEACTNQCRPEPNKQDNEIGQNPCDTFDAECQELRCPYGVRRVAARSQPECTQCICENPCEGYSCPEGQQCAIDVASSDDRQFAPVCRDIYKPGECPALSANASGCARECYTDADCRGDNKCCSDGCGQLCVHPARPTQPPRTQAPVVSYPGDARAALEPKEAHELDVQTAIGGIAVLRCFATGNPAPNITWSLKNLVINTNKGRYVLTANGDLTIVQVRQTDDGTYVCVASNGLGEPVRREVALQVTEPVSQPAYIYGDKNVTQIVELNRPAVIRCPAGGFPEPHVSWWRNGQMFGLKNNLMARDYSLVFNSIQLSDLGLYTCEVYNQRRPVSLRVTLKAVGPVRPLSPEEEQYMQYVLNPATRPVTQRPSYPYRPTRPAYVPEPTVNVHAVLALEPKNSYTPGSTIVMSCSVQGYPEPNVTWIKDDVPLYNNERVQITYQPHRLVLSDVTSADSGKYTCRASNAYTYANGEANVSIQSVVPVSPECVDNPYFANCKLIVKGRYCSNPYYTQFCCRSCTLAGQVASPPLHPNAV.

Residues 1–26 (MDLSRRLCSTALVAFIVLASIHDSQS) form the signal peptide. A disordered region spans residues 43–67 (LPESSVTPGGEGNDPDEWTPWSSPS). The 55-residue stretch at 57-111 (PDEWTPWSSPSDCSRTCGGGVSYQTRECLRRDDRGEAVCSGGSRRYFSCNTQDCP) folds into the TSP type-1 1 domain. Disulfide bonds link Cys-69-Cys-105, Cys-73-Cys-110, and Cys-84-Cys-95. Asn-258 and Asn-319 each carry an N-linked (GlcNAc...) asparagine glycan. In terms of domain architecture, TSP type-1 2 spans 338–397 (DTHTWTHHQFNACSASCGGGSQSRKVTCNNRITLAEVNPSLCDQKSKPVEEQACGTEPCA). Residue Asn-419 is glycosylated (N-linked (GlcNAc...) asparagine). TSP type-1 domains are found at residues 461–521 (NCPK…TPCE), 522–575 (GVDW…KSPK), 576–633 (CEAQ…QDCE), and 639–694 (CPGE…EACT). 3 disulfide bridges follow: Cys-462–Cys-504, Cys-473–Cys-515, and Cys-477–Cys-520. Residue Asn-669 is glycosylated (N-linked (GlcNAc...) asparagine). 2 disordered regions span residues 699–1252 (LPLT…CAKS) and 1323–1367 (GEND…PDTK). Composition is skewed to acidic residues over residues 708 to 720 (IEDDEEDCDEDGI) and 727 to 738 (LSDDEKSEDVID). The segment covering 768 to 788 (STGTTFEGSGYDSESTTDSGI) has biased composition (polar residues). The span at 801–879 (EASTDLSSST…ASASESTDVS (79 aa)) shows a compositional bias: low complexity. Residues Asn-889, Asn-914, Asn-917, Asn-950, and Asn-1064 are each glycosylated (N-linked (GlcNAc...) asparagine). Over residues 890 to 1053 (ASDSTPESST…SDNTDITTDG (164 aa)) the composition is skewed to low complexity. A compositionally biased stretch (polar residues) spans 1064-1073 (NASTEGSTEG). Composition is skewed to low complexity over residues 1076 to 1091 (EDTTISTESSGSTEST) and 1104 to 1215 (STVE…IWST). Residues 1237–1248 (SKPRKCKPKKST) show a composition bias toward basic residues. Low complexity predominate over residues 1330–1351 (PETTTVPPTTTTEETQPETTTE). 2 N-linked (GlcNAc...) asparagine glycosylation sites follow: Asn-1489 and Asn-1623. 15 disulfide bridges follow: Cys-1612-Cys-1662, Cys-1621-Cys-1645, Cys-1637-Cys-1658, Cys-1671-Cys-1721, Cys-1680-Cys-1704, Cys-1696-Cys-1717, Cys-1730-Cys-1780, Cys-1739-Cys-1763, Cys-1755-Cys-1776, Cys-1790-Cys-1840, Cys-1799-Cys-1823, Cys-1815-Cys-1836, Cys-1849-Cys-1899, Cys-1858-Cys-1882, and Cys-1874-Cys-1895. 5 consecutive BPTI/Kunitz inhibitor domains span residues 1612-1662 (CGLP…KDTC), 1671-1721 (CLLP…QGTC), 1730-1780 (CEQP…NYNC), 1790-1840 (CALP…EDHC), and 1849-1899 (CEIP…LARC). An N-linked (GlcNAc...) asparagine glycan is attached at Asn-1750. A disordered region spans residues 1902–1928 (KPEPTTTTPATRPQPSRQDVCDEEPAP). Residues 1905–1916 (PTTTTPATRPQP) show a composition bias toward low complexity. 3 disulfides stabilise this stretch: Cys-1922–Cys-1972, Cys-1931–Cys-1955, and Cys-1947–Cys-1968. Residues 1922 to 1972 (CDEEPAPGECSTWVLKWHFDRKIGACRQFYYGNCGGNGNRFETENDCQQRC) enclose the BPTI/Kunitz inhibitor 6 domain. Residues 1972–2004 (CLSQEPPAPTPPRAPAPTRQPDPAPTVAQCSQP) form a disordered region. Residues 1977-1995 (PPAPTPPRAPAPTRQPDPA) show a composition bias toward pro residues. Intrachain disulfides connect Cys-2001–Cys-2051, Cys-2010–Cys-2034, Cys-2026–Cys-2047, Cys-2071–Cys-2121, Cys-2080–Cys-2104, Cys-2096–Cys-2117, Cys-2128–Cys-2178, Cys-2137–Cys-2161, Cys-2153–Cys-2174, Cys-2194–Cys-2244, Cys-2203–Cys-2227, Cys-2219–Cys-2240, Cys-2253–Cys-2303, Cys-2262–Cys-2286, Cys-2278–Cys-2299, Cys-2318–Cys-2371, Cys-2327–Cys-2354, and Cys-2346–Cys-2367. 6 consecutive BPTI/Kunitz inhibitor domains span residues 2001-2051 (CSQP…SARC), 2071-2121 (CFLA…QNEC), 2128-2178 (CALP…LNFC), 2194-2244 (CAEP…ERQC), 2253-2303 (CNEP…QTVC), and 2318-2371 (CLLP…TNQC). An N-linked (GlcNAc...) asparagine glycan is attached at Asn-2020. N-linked (GlcNAc...) asparagine glycosylation is present at Asn-2083. A glycan (N-linked (GlcNAc...) asparagine) is linked at Asn-2205. Residues 2452 to 2498 (DIYKPGECPALSANASGCARECYTDADCRGDNKCCSDGCGQLCVHPA) enclose the WAP domain. N-linked (GlcNAc...) asparagine glycosylation is found at Asn-2465, Asn-2552, and Asn-2625. Ig-like C2-type domains are found at residues 2523-2607 (PKEA…REVA), 2617-2697 (PAYI…RPVS), and 2749-2840 (PTVN…ANVS). A disulfide bond links Cys-2543 and Cys-2592. Cystine bridges form between Cys-2640–Cys-2687 and Cys-2775–Cys-2824. Asn-2784 and Asn-2838 each carry an N-linked (GlcNAc...) asparagine glycan. Residues 2847 to 2886 (VSPECVDNPYFANCKLIVKGRYCSNPYYTQFCCRSCTLAG) enclose the PLAC domain.

It belongs to the papilin family. Homooligomer; disulfide-linked. Post-translationally, N-glycosylated. In terms of processing, sulfated. As to expression, during embryogenesis it first appears in the extracellular matrix during gastrulation and early mesoderm development at sites where basement membranes do not subsequently form. Later, migrating hemocytes prominently produce it together with other ECM components, in basement membranes that underlie epithelia and envelop muscles and emerging organs. At various life stages, it can be synthesized by other cells, such as those of the fat body, and it also occurs in a few, circumscribed regions of relatively amorphous ECM. Isoform E is specifically expressed in ECM of heart and proventriculus. Isoform C is a major component of transitory ECM deposit in the early embryo. Isoform F is a major component of the basement membrane during embryogenesis.

The protein localises to the secreted. Its subcellular location is the extracellular space. The protein resides in the extracellular matrix. It is found in the basement membrane. Its function is as follows. Essential extracellular matrix (ECM) protein that influences cell rearrangements. May act by modulating metalloproteinases action during organogenesis. Able to non-competitively inhibit procollagen N-proteinase, an ADAMTS metalloproteinase. This is Papilin (Ppn) from Drosophila melanogaster (Fruit fly).